Here is a 1047-residue protein sequence, read N- to C-terminus: Ribonucleoside-diphosphate reductase subunit alpha (1047 aa).

3 ATP-cone domains span residues 9–111, 118–219, and 237–327; these read CTIV…KAHR, LSVV…ARVR, and VEVL…EALG. Substrate is bound by residues Thr442, 457 to 458, Gly486, 670 to 674, and 857 to 861; these read SC, NLCTE, and PTATI. An intrachain disulfide couples Cys458 to Cys687. Asn670 (proton acceptor) is an active-site residue. Catalysis depends on Cys672, which acts as the Cysteine radical intermediate. Glu674 functions as the Proton acceptor in the catalytic mechanism.

Belongs to the ribonucleoside diphosphate reductase large chain family. Tetramer of two alpha and two beta subunits.

The catalysed reaction is a 2'-deoxyribonucleoside 5'-diphosphate + [thioredoxin]-disulfide + H2O = a ribonucleoside 5'-diphosphate + [thioredoxin]-dithiol. Under complex allosteric control mediated by deoxynucleoside triphosphates and ATP binding. The type of nucleotide bound at the specificity site determines substrate preference. It seems probable that ATP makes the enzyme reduce CDP and UDP, dGTP favors ADP reduction and dTTP favors GDP reduction. Its function is as follows. Provides the precursors necessary for DNA synthesis. Catalyzes the biosynthesis of deoxyribonucleotides from the corresponding ribonucleotides. The protein is Ribonucleoside-diphosphate reductase subunit alpha (nrdA) of Chlamydia trachomatis serovar D (strain ATCC VR-885 / DSM 19411 / UW-3/Cx).